The primary structure comprises 145 residues: ATP synthase epsilon chain (145 aa).

The segment covering 93-104 (AEAEKARARAQE) has biased composition (basic and acidic residues). The disordered stretch occupies residues 93–113 (AEAEKARARAQEALKNPDASK).

Belongs to the ATPase epsilon chain family. In terms of assembly, F-type ATPases have 2 components, CF(1) - the catalytic core - and CF(0) - the membrane proton channel. CF(1) has five subunits: alpha(3), beta(3), gamma(1), delta(1), epsilon(1). CF(0) has three main subunits: a, b and c.

It is found in the cell inner membrane. Its function is as follows. Produces ATP from ADP in the presence of a proton gradient across the membrane. This Francisella philomiragia subsp. philomiragia (strain ATCC 25017 / CCUG 19701 / FSC 153 / O#319-036) protein is ATP synthase epsilon chain.